A 142-amino-acid polypeptide reads, in one-letter code: Nucleoside diphosphate kinase (142 aa).

6 residues coordinate ATP: Lys-11, Phe-59, Arg-87, Thr-93, Arg-104, and Asn-114. His-117 acts as the Pros-phosphohistidine intermediate in catalysis.

This sequence belongs to the NDK family. As to quaternary structure, homotetramer. Mg(2+) serves as cofactor.

It is found in the cytoplasm. It carries out the reaction a 2'-deoxyribonucleoside 5'-diphosphate + ATP = a 2'-deoxyribonucleoside 5'-triphosphate + ADP. It catalyses the reaction a ribonucleoside 5'-diphosphate + ATP = a ribonucleoside 5'-triphosphate + ADP. In terms of biological role, major role in the synthesis of nucleoside triphosphates other than ATP. The ATP gamma phosphate is transferred to the NDP beta phosphate via a ping-pong mechanism, using a phosphorylated active-site intermediate. In Salinibacter ruber (strain DSM 13855 / M31), this protein is Nucleoside diphosphate kinase.